Reading from the N-terminus, the 134-residue chain is UPF0412 protein YaaI (134 aa).

An N-terminal signal peptide occupies residues 1-23; that stretch reads MRSVLTISASLLFGLALSSVAHA.

This sequence belongs to the UPF0412 family.

In Salmonella choleraesuis (strain SC-B67), this protein is UPF0412 protein YaaI.